The sequence spans 334 residues: Catabolite repressor/activator (334 aa).

The 58-residue stretch at 1–58 (MKLDEIARLAGVSRTTASYVINGKAKQYRVSDKTVEKVMAVVREHNYHPNAVAAGLRA) folds into the HTH lacI-type domain. Positions 3–22 (LDEIARLAGVSRTTASYVIN) form a DNA-binding region, H-T-H motif.

In terms of assembly, homotetramer.

Its function is as follows. Global transcriptional regulator, which plays an important role in the regulation of carbon metabolism. This chain is Catabolite repressor/activator (cra), found in Escherichia coli O157:H7.